The sequence spans 156 residues: Protein-export protein SecB (156 aa).

Belongs to the SecB family. As to quaternary structure, homotetramer, a dimer of dimers. One homotetramer interacts with 1 SecA dimer.

The protein localises to the cytoplasm. In terms of biological role, one of the proteins required for the normal export of preproteins out of the cell cytoplasm. It is a molecular chaperone that binds to a subset of precursor proteins, maintaining them in a translocation-competent state. It also specifically binds to its receptor SecA. The chain is Protein-export protein SecB from Serratia proteamaculans (strain 568).